Here is a 1005-residue protein sequence, read N- to C-terminus: uncharacterized protein (1005 aa).

The N-terminal stretch at 1-24 (MKFQRKYWGLLSTLGVSSAVALSA) is a signal peptide. A lipid anchor (N-palmitoyl cysteine) is attached at C25. C25 carries S-diacylglycerol cysteine lipidation. Disordered stretches follow at residues 105–165 (KKDK…EEKF) and 786–825 (TQKI…WDDV). Composition is skewed to low complexity over residues 110–131 (TSSQ…TSTS) and 145–156 (QSSSNGQNNQQS). Positions 786–801 (TQKIDQQNTASTTSDV) are enriched in polar residues.

The protein localises to the cell membrane. This is an uncharacterized protein from Mycoplasma pneumoniae (strain ATCC 29342 / M129 / Subtype 1) (Mycoplasmoides pneumoniae).